The primary structure comprises 465 residues: Putative F-box/FBD/LRR-repeat protein At1g22000 (465 aa).

An F-box domain is found at E28–K74. LRR repeat units follow at residues C154 to Y181, V182 to S207, D210 to E230, N248 to E273, and I339 to N365. In terms of domain architecture, FBD spans S373–L424.

This Arabidopsis thaliana (Mouse-ear cress) protein is Putative F-box/FBD/LRR-repeat protein At1g22000.